The chain runs to 408 residues: G2/mitotic-specific cyclin-B (408 aa).

The protein belongs to the cyclin family. Cyclin AB subfamily. As to quaternary structure, interacts with the CDC2 protein kinase to form a serine/threonine kinase holoenzyme complex also known as maturation promoting factor (MPF). The cyclin subunit imparts substrate specificity to the complex.

Essential for the control of the cell cycle at the G2/M (mitosis) transition. The chain is G2/mitotic-specific cyclin-B from Patella vulgata (Common limpet).